Reading from the N-terminus, the 592-residue chain is Threonine--tRNA ligase (592 aa).

The interval 193–488 is catalytic; that stretch reads DHRKLGPALG…LIEHYGGAFP (296 aa). Zn(2+) contacts are provided by Cys-284, His-335, and His-465.

Belongs to the class-II aminoacyl-tRNA synthetase family. As to quaternary structure, homodimer. Requires Zn(2+) as cofactor.

Its subcellular location is the cytoplasm. The catalysed reaction is tRNA(Thr) + L-threonine + ATP = L-threonyl-tRNA(Thr) + AMP + diphosphate + H(+). Functionally, catalyzes the attachment of threonine to tRNA(Thr) in a two-step reaction: L-threonine is first activated by ATP to form Thr-AMP and then transferred to the acceptor end of tRNA(Thr). Also edits incorrectly charged L-seryl-tRNA(Thr). This Treponema pallidum (strain Nichols) protein is Threonine--tRNA ligase.